We begin with the raw amino-acid sequence, 305 residues long: Beta-lactamase ROB-1 (305 aa).

The signal sequence occupies residues 1 to 33 (MLNKLKIGTLLLLTLTACSPNSVHSVTSNPQPA). Ser-86 acts as the Acyl-ester intermediate in catalysis. Residue 248–250 (KSG) participates in substrate binding.

Belongs to the class-A beta-lactamase family.

It carries out the reaction a beta-lactam + H2O = a substituted beta-amino acid. The polypeptide is Beta-lactamase ROB-1 (rob1) (Actinobacillus pleuropneumoniae (Haemophilus pleuropneumoniae)).